We begin with the raw amino-acid sequence, 473 residues long: Probable serine/threonine-protein kinase glkA (473 aa).

The interval 1 to 84 (MTIPTDNNSS…QSSSTATVNS (84 aa)) is disordered. Over residues 7-84 (NNSSNNKGYN…QSSSTATVNS (78 aa)) the composition is skewed to low complexity. The region spanning 91–366 (YEIIKQVGQG…IDEIIAHPFL (276 aa)) is the Protein kinase domain. ATP is bound by residues 97–105 (VGQGTFGKV) and Lys-119. Asp-208 acts as the Proton acceptor in catalysis. Disordered stretches follow at residues 389–418 (GKSS…SNNK) and 437–473 (SSNL…TNTI). The span at 442 to 466 (SIDNSNNGKSSSSSNNIPSLNNSNN) shows a compositional bias: low complexity.

The protein belongs to the protein kinase superfamily. CMGC Ser/Thr protein kinase family. GSK-3 subfamily.

The enzyme catalyses L-seryl-[tau protein] + ATP = O-phospho-L-seryl-[tau protein] + ADP + H(+). It carries out the reaction L-threonyl-[tau protein] + ATP = O-phospho-L-threonyl-[tau protein] + ADP + H(+). The polypeptide is Probable serine/threonine-protein kinase glkA (glkA) (Dictyostelium discoideum (Social amoeba)).